Reading from the N-terminus, the 331-residue chain is Phenylalanine--tRNA ligase alpha subunit (331 aa).

Residue Glu-252 coordinates Mg(2+).

It belongs to the class-II aminoacyl-tRNA synthetase family. Phe-tRNA synthetase alpha subunit type 1 subfamily. As to quaternary structure, tetramer of two alpha and two beta subunits. Requires Mg(2+) as cofactor.

It is found in the cytoplasm. It catalyses the reaction tRNA(Phe) + L-phenylalanine + ATP = L-phenylalanyl-tRNA(Phe) + AMP + diphosphate + H(+). This is Phenylalanine--tRNA ligase alpha subunit from Hahella chejuensis (strain KCTC 2396).